A 311-amino-acid chain; its full sequence is MGQDRGFGFPTQRLCSLSSLALSHLGKQDLNLVSKTCGDTTDMFSTRGSYQVSTQVSQSYFDGYCGWVHGSSHLQQQFLPPQNQCMKQVPLQVDGVISKAEEQCSQKRFLVFDQSGDQTTLLLASDIRKSFETLKQHACPDMKEELQRSNKDLFVCHGMQGNSEPDLKEDSEELNALLYSEDESGYCSEEDEVTSADHSPSIVVSGREDQKTFLGSYGQPLNAKKRKILETSNESMRDAESSCGSCDNTRISFLKRSKLSSNKIGEEKIFETVSLLRSVVPGEELVDPILVIDRAIDYLKSLKMEAKNREA.

The bHLH domain maps to 253 to 302 (FLKRSKLSSNKIGEEKIFETVSLLRSVVPGEELVDPILVIDRAIDYLKSL).

Homodimer.

The protein resides in the nucleus. In Arabidopsis thaliana (Mouse-ear cress), this protein is Transcription factor bHLH145 (BHLH145).